The sequence spans 650 residues: MTTRQHTVCVIGAGPRGLSVIERLCAAARAAAPDTAIGIHVVDPHAPGAGQVWRTSQSAHLLMNTVAGQISVFTDASVELTGPLEPGPSLHAWAEALLAGDIPGHYPDQVLDEARALGPDTYPTRAFYGHYLRWAFDRTVAGAPDCVTVTWHRSRAVALDDEAVALATGHPPRQRVTLEDGEVLEHLDAVVLSQGHLPARPTAVEEQFAALAREHGHTHLPPANPADTELECVQPGQPVLLRGLGLNFFDYMALLTTGRGGSFTRVYGRLVYLPSGREPRMYAGSRRGVPYQARGENEKGPHGRHEPLLLTPARIARLQAARGTDGADFQRDVWPLVAKEVETVYYRTLLTARGRGDRAESFQRAFLRALPGTSAEETVLDAYEIGEKDRWDWDRLSRPYQDQEFGSPEDFTAWLLDHLREDVAEARSGNVSGPLKAALDVLRDLRNEIRLVVDHGGLHGDSHREHLDRWYTPLNAFLSIGPPASRIEEAAALIEAGVLHIIGPDLRVDVDRQGFHAHSPLVPGSRISAEVLIEARLPDITLSRTEDPLLRRLLDSGQCATHRIATRNGTWIYTEGVAVTPRPFQLLDAARRPHPRRYAFGVPTESVHWVTAAGIRPGVNSVTLTDSDAIAQAALGAVLEQRDSLERTAA.

Belongs to the nitrosuccinic acid synthase family. FAD serves as cofactor.

It carries out the reaction L-aspartate + 3 NADPH + 3 O2 + 2 H(+) = 2-nitrobutanedioate + 3 NADP(+) + 4 H2O. In terms of biological role, involved in the biosynthesis of desferrioxamine derivatives which have iron-binding properties and may act as siderophores. Catalyzes the iterative oxidation of L-aspartic acid to nitrosuccinic acid (2-nitrobutanedioate) via N-hydroxyaspartic acid and nitrososuccinic acid. The polypeptide is L-aspartate N-monooxygenase (nitrosuccinate-forming) (Streptomyces davaonensis (strain DSM 101723 / JCM 4913 / KCC S-0913 / 768)).